We begin with the raw amino-acid sequence, 173 residues long: Shikimate kinase (173 aa).

11-16 (GTGKTS) is a binding site for ATP. Residue Thr15 coordinates Mg(2+). Substrate-binding residues include Asp33, Arg57, and Gly79. Arg117 is a binding site for ATP. A substrate-binding site is contributed by Arg136.

It belongs to the shikimate kinase family. Monomer. Mg(2+) is required as a cofactor.

The protein resides in the cytoplasm. It carries out the reaction shikimate + ATP = 3-phosphoshikimate + ADP + H(+). The protein operates within metabolic intermediate biosynthesis; chorismate biosynthesis; chorismate from D-erythrose 4-phosphate and phosphoenolpyruvate: step 5/7. In terms of biological role, catalyzes the specific phosphorylation of the 3-hydroxyl group of shikimic acid using ATP as a cosubstrate. The protein is Shikimate kinase of Thermodesulfovibrio yellowstonii (strain ATCC 51303 / DSM 11347 / YP87).